Here is a 55-residue protein sequence, read N- to C-terminus: Large ribosomal subunit protein bL32c (55 aa).

The protein belongs to the bacterial ribosomal protein bL32 family.

It is found in the plastid. The protein resides in the chloroplast. In Atropa belladonna (Belladonna), this protein is Large ribosomal subunit protein bL32c.